The chain runs to 235 residues: Ribonuclease 3 (235 aa).

In terms of domain architecture, RNase III spans 7–134 (LKDLQNKIEI…LIASIYLDKG (128 aa)). Residue Glu-47 coordinates Mg(2+). Asp-51 is an active-site residue. Positions 120 and 123 each coordinate Mg(2+). Residue Glu-123 is part of the active site. Residues 161-230 (DYKTKLQEII…AKKAIENMEV (70 aa)) enclose the DRBM domain.

It belongs to the ribonuclease III family. As to quaternary structure, homodimer. Mg(2+) is required as a cofactor.

It is found in the cytoplasm. It carries out the reaction Endonucleolytic cleavage to 5'-phosphomonoester.. Digests double-stranded RNA. Involved in the processing of primary rRNA transcript to yield the immediate precursors to the large and small rRNAs (23S and 16S). Processes some mRNAs, and tRNAs when they are encoded in the rRNA operon. Processes pre-crRNA and tracrRNA of type II CRISPR loci if present in the organism. The sequence is that of Ribonuclease 3 from Clostridium tetani (strain Massachusetts / E88).